The sequence spans 469 residues: Glutamate--tRNA ligase (469 aa).

The 'HIGH' region motif lies at 11–21 (PSPTGFIHLGN). The span at 118–131 (GEKPRYDGTWRPEP) shows a compositional bias: basic and acidic residues. Residues 118–139 (GEKPRYDGTWRPEPGKVLPEPP) form a disordered region. The 'KMSKS' region signature appears at 243 to 247 (KMSKR). K246 lines the ATP pocket.

This sequence belongs to the class-I aminoacyl-tRNA synthetase family. Glutamate--tRNA ligase type 1 subfamily. Monomer.

Its subcellular location is the cytoplasm. The catalysed reaction is tRNA(Glu) + L-glutamate + ATP = L-glutamyl-tRNA(Glu) + AMP + diphosphate. In terms of biological role, catalyzes the attachment of glutamate to tRNA(Glu) in a two-step reaction: glutamate is first activated by ATP to form Glu-AMP and then transferred to the acceptor end of tRNA(Glu). The polypeptide is Glutamate--tRNA ligase (Burkholderia pseudomallei (strain 1106a)).